A 389-amino-acid chain; its full sequence is Zip homologous protein 3 (389 aa).

Residues 6–43 (CNKCFNRKPPDGFFISSCFHIFCTKCAKADLAVCLICK) form an RING-type zinc finger. Residues 123 to 164 (LAEATAWIQMAEKKLQASEEERVKAEREIEECQAKLKSMTNL) adopt a coiled-coil conformation. The disordered stretch occupies residues 366–389 (ISSQPGYLAQRKPINGRSFIGPAD).

Interacts with zhp-4; the interaction is required for their localization along paired chromosomes and stability, and for the formation of chiasma during meiotic recombination. Expressed througout the gonad (at protein level). Expressed in the germline.

The protein resides in the chromosome. In terms of biological role, recruited co-dependently with zhp-4 to the synaptonemal complex between homologous chromosome pairs to regulate the formation and number of crossover events between homologs during meiotic recombination. In the early stages of pachytene, in complex with zhp-4, recruited by the zhp-1-zhp-2 heterodimer to designated crossover sites along the homolog pair to stabilize other pro-crossover factors such as rmh-1, msh-5 and cosa-1. This in turn facilitates crossover and promotes the formation of chiasma in each meiotic nucleus at the late pachytene stage of meiosis. Plays a role in the segregation of homologous chromosomes following the completion of crossovers. Together with him-14 and msh-5 plays a role in the activation of DNA damage-dependent apoptosis at the DNA damage checkpoint in pachytene cells. The polypeptide is Zip homologous protein 3 (Caenorhabditis elegans).